Reading from the N-terminus, the 83-residue chain is MYB-like transcription factor ETC1 (83 aa).

One can recognise a Myb-like domain in the interval 35–72 (AQEEEDLICRMYKLVGERWDLIAGRIPGRTAEEIERFW).

Expressed in developing trichomes and non-root hair cells.

The protein localises to the nucleus. MYB-type transcription factor involved in epidermal cell fate specification. Acts as a negative regulator of trichome development, by mediating lateral inhibition. Promotes the formation of hair developing cells in H position in root epidermis, probably by inhibiting non-hair cell formation. The chain is MYB-like transcription factor ETC1 (ETC1) from Arabidopsis thaliana (Mouse-ear cress).